The chain runs to 279 residues: Movement protein (279 aa).

Residues S255–L279 are disordered. The span at P263–L279 shows a compositional bias: polar residues.

It belongs to the cucumovirus movement protein family.

Its subcellular location is the host cell junction. It is found in the host plasmodesma. Transports viral genome to neighboring plant cells directly through plasmosdesmata, without any budding. The movement protein allows efficient cell to cell propagation, by bypassing the host cell wall barrier. Acts by forming a tubular structure at the host plasmodesmata, enlarging it enough to allow free passage of virion capsids. This is Movement protein from Cucumis sativus (Cucumber).